The following is a 110-amino-acid chain: Large ribosomal subunit protein uL22 (110 aa).

This sequence belongs to the universal ribosomal protein uL22 family. Part of the 50S ribosomal subunit.

This protein binds specifically to 23S rRNA; its binding is stimulated by other ribosomal proteins, e.g. L4, L17, and L20. It is important during the early stages of 50S assembly. It makes multiple contacts with different domains of the 23S rRNA in the assembled 50S subunit and ribosome. In terms of biological role, the globular domain of the protein is located near the polypeptide exit tunnel on the outside of the subunit, while an extended beta-hairpin is found that lines the wall of the exit tunnel in the center of the 70S ribosome. The polypeptide is Large ribosomal subunit protein uL22 (Acidovorax ebreus (strain TPSY) (Diaphorobacter sp. (strain TPSY))).